The primary structure comprises 364 residues: NADH-quinone oxidoreductase subunit H (364 aa).

Transmembrane regions (helical) follow at residues 21–41 (AGQI…LLLA), 88–108 (VFLL…AVIP), 120–140 (VGIL…IMGG), 159–179 (MVSY…LAGS), 208–228 (LPLL…GLAE), 267–287 (IVLI…APFP), 301–321 (FYYF…VSMA), and 340–360 (VFLP…VFGP).

Belongs to the complex I subunit 1 family. NDH-1 is composed of 14 different subunits. Subunits NuoA, H, J, K, L, M, N constitute the membrane sector of the complex.

It localises to the cell inner membrane. The catalysed reaction is a quinone + NADH + 5 H(+)(in) = a quinol + NAD(+) + 4 H(+)(out). Its function is as follows. NDH-1 shuttles electrons from NADH, via FMN and iron-sulfur (Fe-S) centers, to quinones in the respiratory chain. The immediate electron acceptor for the enzyme in this species is believed to be ubiquinone. Couples the redox reaction to proton translocation (for every two electrons transferred, four hydrogen ions are translocated across the cytoplasmic membrane), and thus conserves the redox energy in a proton gradient. This subunit may bind ubiquinone. In Phenylobacterium zucineum (strain HLK1), this protein is NADH-quinone oxidoreductase subunit H.